The chain runs to 750 residues: Photosystem I P700 chlorophyll a apoprotein A1 (750 aa).

The next 8 membrane-spanning stretches (helical) occupy residues 70 to 93 (VFSA…FHGA), 156 to 179 (LYCT…FHYH), 195 to 219 (LNHH…HVSL), 291 to 309 (IAHH…GHMY), 346 to 369 (WHAQ…HHMY), 385 to 411 (LSLF…IFMV), 433 to 455 (AIIS…LYIH), and 531 to 549 (FLVH…LILL). [4Fe-4S] cluster-binding residues include cysteine 573 and cysteine 582. 2 helical membrane passes run 589–610 (HVFL…HFSW) and 664–686 (LSAY…MFLF). Residue histidine 675 participates in chlorophyll a' binding. The chlorophyll a site is built by methionine 683 and tyrosine 691. Tryptophan 692 is a binding site for phylloquinone. The chain crosses the membrane as a helical span at residues 724–744 (AVGVTHYLLGGIATTWAFFLA).

The protein belongs to the PsaA/PsaB family. The PsaA/B heterodimer binds the P700 chlorophyll special pair and subsequent electron acceptors. PSI consists of a core antenna complex that captures photons, and an electron transfer chain that converts photonic excitation into a charge separation. The eukaryotic PSI reaction center is composed of at least 11 subunits. The cofactor is P700 is a chlorophyll a/chlorophyll a' dimer, A0 is one or more chlorophyll a, A1 is one or both phylloquinones and FX is a shared 4Fe-4S iron-sulfur center..

It is found in the plastid. The protein localises to the chloroplast thylakoid membrane. The enzyme catalyses reduced [plastocyanin] + hnu + oxidized [2Fe-2S]-[ferredoxin] = oxidized [plastocyanin] + reduced [2Fe-2S]-[ferredoxin]. In terms of biological role, psaA and PsaB bind P700, the primary electron donor of photosystem I (PSI), as well as the electron acceptors A0, A1 and FX. PSI is a plastocyanin-ferredoxin oxidoreductase, converting photonic excitation into a charge separation, which transfers an electron from the donor P700 chlorophyll pair to the spectroscopically characterized acceptors A0, A1, FX, FA and FB in turn. Oxidized P700 is reduced on the lumenal side of the thylakoid membrane by plastocyanin. This chain is Photosystem I P700 chlorophyll a apoprotein A1, found in Vitis vinifera (Grape).